The primary structure comprises 704 residues: Ubiquitin-like modifier-activating enzyme atg7 (704 aa).

Residues 372-377 (GAGTLG) carry the GXGXXG motif motif. Catalysis depends on C555, which acts as the Glycyl thioester intermediate. Residues 660 to 699 (ALTEKDYITELSGLAEVQRKAEAAANDVEWDSDEEGMEDE) are homodimerization. The tract at residues 682–704 (AAANDVEWDSDEEGMEDEEPELL) is disordered. The span at 687 to 704 (VEWDSDEEGMEDEEPELL) shows a compositional bias: acidic residues.

Belongs to the ATG7 family. Homodimer. Interacts with ATG8 through a thioester bond between Cys-555 and the C-terminal Gly of ATG8 and with ATG12 through a thioester bond between Cys-555 and the C-terminal Gly of ATG12. Also interacts with ATG3.

It localises to the cytoplasm. Its subcellular location is the preautophagosomal structure. In terms of biological role, E1-like activating enzyme involved in the 2 ubiquitin-like systems required for cytoplasm to vacuole transport (Cvt) and autophagy. Activates ATG12 for its conjugation with ATG5 and ATG8 for its conjugation with phosphatidylethanolamine. Both systems are needed for the ATG8 association to Cvt vesicles and autophagosomes membranes. Autophagy is essential for maintenance of amino acid levels and protein synthesis under nitrogen starvation. Required for selective autophagic degradation of the nucleus (nucleophagy) as well as for mitophagy which contributes to regulate mitochondrial quantity and quality by eliminating the mitochondria to a basal level to fulfill cellular energy requirements and preventing excess ROS production. Required for normal mycelial growth and conidiogenesis, and regulates sclerotial formation. Plays an essential role in pathogenesis. The polypeptide is Ubiquitin-like modifier-activating enzyme atg7 (Botryotinia fuckeliana (strain T4) (Noble rot fungus)).